Here is a 513-residue protein sequence, read N- to C-terminus: 2-isopropylmalate synthase (513 aa).

Residues 4–266 (IEFFDTSLRD…KSPLVLAETM (263 aa)) form the Pyruvate carboxyltransferase domain. Residues D13, H201, H203, and N237 each coordinate Mn(2+). The segment at 390–513 (ILNNVQIDGH…VEQISAHDGI (124 aa)) is regulatory domain.

It belongs to the alpha-IPM synthase/homocitrate synthase family. LeuA type 1 subfamily. In terms of assembly, homodimer. Mn(2+) serves as cofactor.

It localises to the cytoplasm. The enzyme catalyses 3-methyl-2-oxobutanoate + acetyl-CoA + H2O = (2S)-2-isopropylmalate + CoA + H(+). It participates in amino-acid biosynthesis; L-leucine biosynthesis; L-leucine from 3-methyl-2-oxobutanoate: step 1/4. Its function is as follows. Catalyzes the condensation of the acetyl group of acetyl-CoA with 3-methyl-2-oxobutanoate (2-ketoisovalerate) to form 3-carboxy-3-hydroxy-4-methylpentanoate (2-isopropylmalate). The protein is 2-isopropylmalate synthase of Lactococcus lactis subsp. cremoris (strain SK11).